We begin with the raw amino-acid sequence, 170 residues long: Large ribosomal subunit protein uL10 (170 aa).

The protein belongs to the universal ribosomal protein uL10 family. Part of the ribosomal stalk of the 50S ribosomal subunit. The N-terminus interacts with L11 and the large rRNA to form the base of the stalk. The C-terminus forms an elongated spine to which L12 dimers bind in a sequential fashion forming a multimeric L10(L12)X complex.

Its function is as follows. Forms part of the ribosomal stalk, playing a central role in the interaction of the ribosome with GTP-bound translation factors. The protein is Large ribosomal subunit protein uL10 of Corynebacterium urealyticum (strain ATCC 43042 / DSM 7109).